A 150-amino-acid chain; its full sequence is MEKKVEFLWLEGRETETLSLPAYETEGAAGMDVAACLDADCTIEPGDIVLIPTGFALAIPTGYEIQVRPRSGLAIKHGLTVVNAPGTIDADYRGEVGVGLINLGRQAVTIHHGDRIAQLVLAPVLQARWTVVTELEATERGAGGFGHTGV.

Residues 70-72 (RSG), Asn83, and 87-89 (TID) contribute to the substrate site.

Belongs to the dUTPase family. Mg(2+) serves as cofactor.

It carries out the reaction dUTP + H2O = dUMP + diphosphate + H(+). It participates in pyrimidine metabolism; dUMP biosynthesis; dUMP from dCTP (dUTP route): step 2/2. This enzyme is involved in nucleotide metabolism: it produces dUMP, the immediate precursor of thymidine nucleotides and it decreases the intracellular concentration of dUTP so that uracil cannot be incorporated into DNA. This chain is Deoxyuridine 5'-triphosphate nucleotidohydrolase, found in Desulfotalea psychrophila (strain LSv54 / DSM 12343).